The chain runs to 1458 residues: DNA polymerase alpha catalytic subunit (1458 aa).

2 disordered regions span residues 1-25 and 89-119; these read MSDSGSFAASRSRREKTEKSGRKEA and DLEDNALADSGKGAKGAPKDKTNVKKSSVSK. Residues 15–25 show a composition bias toward basic and acidic residues; the sequence is EKTEKSGRKEA. DNA-binding regions lie at residues 650–715 and 1241–1373; these read RINS…VHQI and QFRA…ACSK. Zn(2+) contacts are provided by Cys-1280, Cys-1283, Cys-1307, Cys-1312, Cys-1345, Cys-1350, Cys-1368, and Cys-1371. The CysA-type zinc finger occupies 1280 to 1310; sequence CPKCGTENIYDNVFDGSGLQIEPGLKRCSKP. A CysB motif motif is present at residues 1345–1371; sequence CEEKTCQNRTRRLPLSFSRNGPICQAC.

This sequence belongs to the DNA polymerase type-B family. In terms of assembly, the DNA polymerase alpha complex is composed of four subunits: the catalytic subunit POLA1, the regulatory subunit POLA2, and the small and the large primase subunits PRIM1 and PRIM2 respectively. Interacts with PARP1; this interaction functions as part of the control of replication fork progression. Interacts with MCM10 and WDHD1; these interactions recruit the polymerase alpha complex to the pre-replicative complex bound to DNA. Interacts with RPA1; this interaction stabilizes the replicative complex and reduces the misincorporation rate of DNA polymerase alpha by acting as a fidelity clamp.

It localises to the nucleus. It catalyses the reaction DNA(n) + a 2'-deoxyribonucleoside 5'-triphosphate = DNA(n+1) + diphosphate. Functionally, plays an essential role in the initiation of DNA replication. During the S phase of the cell cycle, the DNA polymerase alpha complex (composed of a catalytic subunit POLA1/p180, a regulatory subunit POLA2/p70 and two primase subunits PRIM1/p49 and PRIM2/p58) is recruited to DNA at the replicative forks via direct interactions with MCM10 and WDHD1. The primase subunit of the polymerase alpha complex initiates DNA synthesis by oligomerising short RNA primers on both leading and lagging strands. These primers are initially extended by the polymerase alpha catalytic subunit and subsequently transferred to polymerase delta and polymerase epsilon for processive synthesis on the lagging and leading strand, respectively. The reason this transfer occurs is because the polymerase alpha has limited processivity and lacks intrinsic 3' exonuclease activity for proofreading error, and therefore is not well suited for replicating long complexes. This Xenopus laevis (African clawed frog) protein is DNA polymerase alpha catalytic subunit (pola1).